Consider the following 173-residue polypeptide: Photosystem I assembly protein Ycf3 (173 aa).

TPR repeat units follow at residues 35-68 (AFVY…EDDA), 72-105 (SYIL…NPNL), and 120-153 (GERA…APNN).

Belongs to the Ycf3 family.

It is found in the cellular thylakoid membrane. In terms of biological role, essential for the assembly of the photosystem I (PSI) complex. May act as a chaperone-like factor to guide the assembly of the PSI subunits. The protein is Photosystem I assembly protein Ycf3 of Gloeothece citriformis (strain PCC 7424) (Cyanothece sp. (strain PCC 7424)).